The chain runs to 70 residues: MDLNLRHAVIANVSGNSQEELEHTIVDAIQSGEEKMLPGLGVLFEVIWQHATESDKTEMLETLEQGLKAK.

This sequence belongs to the SspI family.

The protein localises to the spore core. This chain is Small, acid-soluble spore protein I, found in Bacillus licheniformis (strain ATCC 14580 / DSM 13 / JCM 2505 / CCUG 7422 / NBRC 12200 / NCIMB 9375 / NCTC 10341 / NRRL NRS-1264 / Gibson 46).